The sequence spans 516 residues: Levanbiose-producing levanase (516 aa).

Topologically, residues 1–5 (MNYIK) are cytoplasmic. Residues 6 to 26 (AGKWLTVFLTFLGILLFIDLF) form a helical membrane-spanning segment. The Extracellular segment spans residues 27–516 (PKEEHDQKTK…TVKHFDSIHE (490 aa)). Residues 55–58 (WKND), 116–117 (WT), 181–182 (RD), E230, and W318 each bind substrate. Residue D58 is part of the active site.

Belongs to the glycosyl hydrolase 32 family.

The protein resides in the cell membrane. The catalysed reaction is Hydrolysis of (2-&gt;6)-beta-D-fructofuranan, to remove successive disaccharide residues as levanbiose, i.e. 6-(beta-D-fructofuranosyl)-D-fructose, from the end of the chain.. Functionally, catalyzes the degradation of levan mainly into levanbiose (difructose). Is not active on sucrose. This chain is Levanbiose-producing levanase (levB), found in Bacillus subtilis (strain 168).